We begin with the raw amino-acid sequence, 436 residues long: 3-ketoacyl-CoA thiolase (436 aa).

Catalysis depends on Cys99, which acts as the Acyl-thioester intermediate. Active-site proton acceptor residues include His392 and Cys422.

Belongs to the thiolase-like superfamily. Thiolase family. Heterotetramer of two alpha chains (FadJ) and two beta chains (FadI).

It localises to the cytoplasm. It catalyses the reaction an acyl-CoA + acetyl-CoA = a 3-oxoacyl-CoA + CoA. It functions in the pathway lipid metabolism; fatty acid beta-oxidation. Catalyzes the final step of fatty acid oxidation in which acetyl-CoA is released and the CoA ester of a fatty acid two carbons shorter is formed. The sequence is that of 3-ketoacyl-CoA thiolase from Shewanella sp. (strain W3-18-1).